The following is a 528-amino-acid chain: Probable serine/threonine-protein kinase DDB_G0282417 (528 aa).

Residues 49 to 77 (NNNNNNNNNNNNNNNNNNNNNNNNNNKNN) show a composition bias toward low complexity. Positions 49–84 (NNNNNNNNNNNNNNNNNNNNNNNNNNKNNNDGDDAA) are disordered. A Protein kinase domain is found at 136–466 (QQNRVLIGEG…ESLINNHQYS (331 aa)). ATP is bound by residues 142 to 150 (IGEGHYGKV) and lysine 166. The active-site Proton acceptor is aspartate 266.

It belongs to the protein kinase superfamily. Ser/Thr protein kinase family.

It carries out the reaction L-seryl-[protein] + ATP = O-phospho-L-seryl-[protein] + ADP + H(+). The catalysed reaction is L-threonyl-[protein] + ATP = O-phospho-L-threonyl-[protein] + ADP + H(+). The chain is Probable serine/threonine-protein kinase DDB_G0282417 from Dictyostelium discoideum (Social amoeba).